Consider the following 363-residue polypeptide: Phosphoserine aminotransferase (363 aa).

Arg42 lines the L-glutamate pocket. Residues 76 to 77 (GR), Trp102, Thr156, Asp175, and Gln198 each bind pyridoxal 5'-phosphate. An N6-(pyridoxal phosphate)lysine modification is found at Lys199. 240–241 (NT) is a binding site for pyridoxal 5'-phosphate.

It belongs to the class-V pyridoxal-phosphate-dependent aminotransferase family. SerC subfamily. As to quaternary structure, homodimer. Requires pyridoxal 5'-phosphate as cofactor.

The protein resides in the cytoplasm. It catalyses the reaction O-phospho-L-serine + 2-oxoglutarate = 3-phosphooxypyruvate + L-glutamate. The enzyme catalyses 4-(phosphooxy)-L-threonine + 2-oxoglutarate = (R)-3-hydroxy-2-oxo-4-phosphooxybutanoate + L-glutamate. Its pathway is amino-acid biosynthesis; L-serine biosynthesis; L-serine from 3-phospho-D-glycerate: step 2/3. It functions in the pathway cofactor biosynthesis; pyridoxine 5'-phosphate biosynthesis; pyridoxine 5'-phosphate from D-erythrose 4-phosphate: step 3/5. Its function is as follows. Catalyzes the reversible conversion of 3-phosphohydroxypyruvate to phosphoserine and of 3-hydroxy-2-oxo-4-phosphonooxybutanoate to phosphohydroxythreonine. The protein is Phosphoserine aminotransferase of Shewanella sp. (strain W3-18-1).